A 915-amino-acid chain; its full sequence is MPAAIDKDENIQKEGKRIELVKDSPKQFAASGAAAVSAQPNSDKLADVSPLHAERTVAQAQEASVSSFNEEEVIHDLQHYLPSQAPLKDFIHHNTLHAFQNYPFHEGTRRAKKIFGYFPSLQLREYRDLYEAGRIRKDILERVISEQKGAQHLEDWMQRLLEKEYDDSVSPRIGKLRANWKRHYPIDLDLMVHPLLFRILCSYLDQGISIWGFPIGHKGFLAALKEMEEKSFASFFKTKRAKKLLVSGNCKMADLLKLLVGDETLYAQYLFDQQFAHPGWSGMVASVEAQPASLLNPKNITVHDLVVFELLLEIDALDSYFGESWEPIAHILEERPEPLFADVPETEVDTVFSLWHDAFEWTYYDQVLTGIALQDKTWERKIENRSFQTYFCIDDRLTSFRRYLEQLDPDCETFTTAGFFNVELYYQPENGKFYTKCCPAPVFPKFLVKEIGNKQKIKKEVHFSKLTHSLFQGWFISQTIGFVSALRLALNVFKPGSMPAGASSYTHVDKNATLTIENKDPNDKENGLQIGFTIDEMVQRVQGVLTSTGLNGVDKTFAPIVYMIGHGASSVNNPHYTAYDCGACGGRPGSVNARTFCYMANHPKVREALKERGIIIPPTTQFLPGLHDTTRDEVAFFDEEILSEENAGKHRRNTLVINEALDLHAKERSRRLVSIDTKMSPKEIHEEIRRRSVSLFEPRPELNHATNAVSIIGRRSITENLFLDRRASTSTYDYRTDPEGKFLTMSMGPIALVMGGIDLEYFFSRTDNHKMGAGTKLPHNVMGLIGVANGADGDLRTGLPSQMIEIHDPVRLLVIIEHYPDVALKVIKSQTANYSFYENYWVHCLALHPDTGELWLYKDGSFSKIYKPLLNDLETVSDLSALMERAKKAESIETLDAVQENLPVYFIEKKERVKK.

Zn(2+)-binding residues include C392, D394, H566, and C581.

Belongs to the inorganic carbon transporter (TC 9.A.2) DabA family. Forms a complex with DabB. The cofactor is Zn(2+).

The protein localises to the cell inner membrane. Functionally, part of an energy-coupled inorganic carbon pump. In Nitrosospira multiformis (strain ATCC 25196 / NCIMB 11849 / C 71), this protein is Probable inorganic carbon transporter subunit DabA.